The chain runs to 702 residues: Ribosomal RNA large subunit methyltransferase K/L (702 aa).

The region spanning 43–154 (LVYQSLMWSR…KETASIALDL (112 aa)) is the THUMP domain.

It belongs to the methyltransferase superfamily. RlmKL family.

Its subcellular location is the cytoplasm. It catalyses the reaction guanosine(2445) in 23S rRNA + S-adenosyl-L-methionine = N(2)-methylguanosine(2445) in 23S rRNA + S-adenosyl-L-homocysteine + H(+). The catalysed reaction is guanosine(2069) in 23S rRNA + S-adenosyl-L-methionine = N(2)-methylguanosine(2069) in 23S rRNA + S-adenosyl-L-homocysteine + H(+). Functionally, specifically methylates the guanine in position 2445 (m2G2445) and the guanine in position 2069 (m7G2069) of 23S rRNA. This is Ribosomal RNA large subunit methyltransferase K/L from Shigella boydii serotype 4 (strain Sb227).